A 577-amino-acid polypeptide reads, in one-letter code: Isocitrate dehydrogenase kinase/phosphatase (577 aa).

ATP is bound by residues 324–330 (APGIRGL) and K345. D380 is a catalytic residue.

The protein belongs to the AceK family.

The protein localises to the cytoplasm. It carries out the reaction L-seryl-[isocitrate dehydrogenase] + ATP = O-phospho-L-seryl-[isocitrate dehydrogenase] + ADP + H(+). Bifunctional enzyme which can phosphorylate or dephosphorylate isocitrate dehydrogenase (IDH) on a specific serine residue. This is a regulatory mechanism which enables bacteria to bypass the Krebs cycle via the glyoxylate shunt in response to the source of carbon. When bacteria are grown on glucose, IDH is fully active and unphosphorylated, but when grown on acetate or ethanol, the activity of IDH declines drastically concomitant with its phosphorylation. This chain is Isocitrate dehydrogenase kinase/phosphatase, found in Pseudoalteromonas atlantica (strain T6c / ATCC BAA-1087).